The chain runs to 64 residues: Conotoxin Leo-T1 (64 aa).

A signal peptide spans 1-22 (MRCLPVFIILLLLIPSAPSVDA). Positions 23–48 (QPKTEDDVPLASLHDNAKLTLQGLWD) are excised as a propeptide.

Belongs to the conotoxin T superfamily. In terms of processing, contains 2 disulfide bonds that can be either 'C1-C3, C2-C4' or 'C1-C4, C2-C3', since these disulfide connectivities have been observed for conotoxins with cysteine framework V (for examples, see AC P0DQQ7 and AC P81755). In terms of tissue distribution, expressed by the venom duct.

The protein localises to the secreted. This Conus leopardus (Leopard cone) protein is Conotoxin Leo-T1.